A 1141-amino-acid polypeptide reads, in one-letter code: DNA-directed RNA polymerase subunit beta (1141 aa).

Acidic residues-rich tracts occupy residues 1063–1074 and 1096–1141; these read EIEIKEDDDDVS and GGNE…GDEE. The disordered stretch occupies residues 1063–1141; that stretch reads EIEIKEDDDD…VPDEAYGDEE (79 aa).

Belongs to the RNA polymerase beta chain family. In terms of assembly, the RNAP catalytic core consists of 2 alpha, 1 beta, 1 beta' and 1 omega subunit. When a sigma factor is associated with the core the holoenzyme is formed, which can initiate transcription.

The catalysed reaction is RNA(n) + a ribonucleoside 5'-triphosphate = RNA(n+1) + diphosphate. In terms of biological role, DNA-dependent RNA polymerase catalyzes the transcription of DNA into RNA using the four ribonucleoside triphosphates as substrates. The sequence is that of DNA-directed RNA polymerase subunit beta from Moorella thermoacetica (strain ATCC 39073 / JCM 9320).